We begin with the raw amino-acid sequence, 465 residues long: UDP-N-acetylmuramate--L-alanine ligase (465 aa).

115–121 (GAHGKTT) contributes to the ATP binding site.

This sequence belongs to the MurCDEF family.

The protein localises to the cytoplasm. The catalysed reaction is UDP-N-acetyl-alpha-D-muramate + L-alanine + ATP = UDP-N-acetyl-alpha-D-muramoyl-L-alanine + ADP + phosphate + H(+). It functions in the pathway cell wall biogenesis; peptidoglycan biosynthesis. In terms of biological role, cell wall formation. This chain is UDP-N-acetylmuramate--L-alanine ligase, found in Coxiella burnetii (strain Dugway 5J108-111).